Consider the following 375-residue polypeptide: 23S rRNA (uracil(747)-C(5))-methyltransferase RlmC (375 aa).

[4Fe-4S] cluster contacts are provided by Cys-3, Cys-11, Cys-14, and Cys-87. Residues Gln-212, Phe-241, Glu-262, and Asn-307 each contribute to the S-adenosyl-L-methionine site. Cys-334 serves as the catalytic Nucleophile.

The protein belongs to the class I-like SAM-binding methyltransferase superfamily. RNA M5U methyltransferase family. RlmC subfamily.

It catalyses the reaction uridine(747) in 23S rRNA + S-adenosyl-L-methionine = 5-methyluridine(747) in 23S rRNA + S-adenosyl-L-homocysteine + H(+). In terms of biological role, catalyzes the formation of 5-methyl-uridine at position 747 (m5U747) in 23S rRNA. The sequence is that of 23S rRNA (uracil(747)-C(5))-methyltransferase RlmC from Shigella dysenteriae serotype 1 (strain Sd197).